We begin with the raw amino-acid sequence, 399 residues long: Tyrosine--tRNA ligase (399 aa).

A 'HIGH' region motif is present at residues Pro42–His51. The 'KMSKS' region signature appears at Lys226–Ser230. An ATP-binding site is contributed by Lys229. In terms of domain architecture, S4 RNA-binding spans Met336–Leu396.

It belongs to the class-I aminoacyl-tRNA synthetase family. TyrS type 2 subfamily. As to quaternary structure, homodimer.

The protein localises to the cytoplasm. The enzyme catalyses tRNA(Tyr) + L-tyrosine + ATP = L-tyrosyl-tRNA(Tyr) + AMP + diphosphate + H(+). Its function is as follows. Catalyzes the attachment of tyrosine to tRNA(Tyr) in a two-step reaction: tyrosine is first activated by ATP to form Tyr-AMP and then transferred to the acceptor end of tRNA(Tyr). The sequence is that of Tyrosine--tRNA ligase from Pseudomonas fluorescens (strain Pf0-1).